The sequence spans 1160 residues: Pesticidal crystal protein Cry1Db (1160 aa).

It belongs to the delta endotoxin family.

Functionally, promotes colloidosmotic lysis by binding to the midgut epithelial cells of insects. The sequence is that of Pesticidal crystal protein Cry1Db (cry1Db) from Bacillus thuringiensis.